We begin with the raw amino-acid sequence, 602 residues long: Elongation factor 4 (602 aa).

One can recognise a tr-type G domain in the interval 2–184; the sequence is NHIRNFSIIA…QIVAKVPAPR (183 aa). GTP is bound by residues 14–19 and 131–134; these read DHGKST and NKMD.

This sequence belongs to the TRAFAC class translation factor GTPase superfamily. Classic translation factor GTPase family. LepA subfamily.

The protein resides in the cell inner membrane. The catalysed reaction is GTP + H2O = GDP + phosphate + H(+). In terms of biological role, required for accurate and efficient protein synthesis under certain stress conditions. May act as a fidelity factor of the translation reaction, by catalyzing a one-codon backward translocation of tRNAs on improperly translocated ribosomes. Back-translocation proceeds from a post-translocation (POST) complex to a pre-translocation (PRE) complex, thus giving elongation factor G a second chance to translocate the tRNAs correctly. Binds to ribosomes in a GTP-dependent manner. This is Elongation factor 4 from Acidovorax ebreus (strain TPSY) (Diaphorobacter sp. (strain TPSY)).